The chain runs to 190 residues: MTIILGIDPGSRVTGYGVIRQTGRTLEYLGSGVIRTQADDLPTRLKRIYAGVTEIITQFQPDMFAIEEVFLAKNPNSALKLGQARGTAIVAAVNRDLPVFEYAARLVKQTVVGIGSADKSQVQDMVARILKLSDKPQADAADALAIAITHAHTIRHSLHVAASAKTTETQEKLTALMRTRYSRGRFRLKV.

Residues aspartate 8, glutamate 67, and aspartate 139 contribute to the active site. Aspartate 8, glutamate 67, and aspartate 139 together coordinate Mg(2+).

This sequence belongs to the RuvC family. In terms of assembly, homodimer which binds Holliday junction (HJ) DNA. The HJ becomes 2-fold symmetrical on binding to RuvC with unstacked arms; it has a different conformation from HJ DNA in complex with RuvA. In the full resolvosome a probable DNA-RuvA(4)-RuvB(12)-RuvC(2) complex forms which resolves the HJ. Mg(2+) is required as a cofactor.

The protein localises to the cytoplasm. The enzyme catalyses Endonucleolytic cleavage at a junction such as a reciprocal single-stranded crossover between two homologous DNA duplexes (Holliday junction).. Functionally, the RuvA-RuvB-RuvC complex processes Holliday junction (HJ) DNA during genetic recombination and DNA repair. Endonuclease that resolves HJ intermediates. Cleaves cruciform DNA by making single-stranded nicks across the HJ at symmetrical positions within the homologous arms, yielding a 5'-phosphate and a 3'-hydroxyl group; requires a central core of homology in the junction. The consensus cleavage sequence is 5'-(A/T)TT(C/G)-3'. Cleavage occurs on the 3'-side of the TT dinucleotide at the point of strand exchange. HJ branch migration catalyzed by RuvA-RuvB allows RuvC to scan DNA until it finds its consensus sequence, where it cleaves and resolves the cruciform DNA. This is Crossover junction endodeoxyribonuclease RuvC from Actinobacillus succinogenes (strain ATCC 55618 / DSM 22257 / CCUG 43843 / 130Z).